The following is a 425-amino-acid chain: Enolase (425 aa).

Position 163 (glutamine 163) interacts with (2R)-2-phosphoglycerate. The active-site Proton donor is glutamate 205. Mg(2+) contacts are provided by aspartate 242, glutamate 285, and aspartate 312. The (2R)-2-phosphoglycerate site is built by lysine 337, arginine 366, serine 367, and lysine 388. Lysine 337 acts as the Proton acceptor in catalysis.

Belongs to the enolase family. The cofactor is Mg(2+).

The protein resides in the cytoplasm. It is found in the secreted. It localises to the cell surface. The enzyme catalyses (2R)-2-phosphoglycerate = phosphoenolpyruvate + H2O. It participates in carbohydrate degradation; glycolysis; pyruvate from D-glyceraldehyde 3-phosphate: step 4/5. Its function is as follows. Catalyzes the reversible conversion of 2-phosphoglycerate (2-PG) into phosphoenolpyruvate (PEP). It is essential for the degradation of carbohydrates via glycolysis. The protein is Enolase of Cereibacter sphaeroides (strain ATCC 17029 / ATH 2.4.9) (Rhodobacter sphaeroides).